A 775-amino-acid polypeptide reads, in one-letter code: Subtilisin-like protease SBT4.1 (775 aa).

The first 23 residues, Met-1–Ala-23, serve as a signal peptide directing secretion. N-linked (GlcNAc...) asparagine glycosylation is present at Asn-24. The propeptide at Asn-24–Gln-106 is activation peptide. The region spanning Thr-29–Leu-105 is the Inhibitor I9 domain. The 497-residue stretch at Ser-110–Arg-606 folds into the Peptidase S8 domain. N-linked (GlcNAc...) asparagine glycosylation is found at Asn-115 and Asn-126. The active-site Charge relay system is Asp-136. N-linked (GlcNAc...) asparagine glycosylation is present at Asn-162. Catalysis depends on His-196, which acts as the Charge relay system. A PA domain is found at Phe-365–Leu-459. Residue Asn-437 is glycosylated (N-linked (GlcNAc...) asparagine). Ser-551 functions as the Charge relay system in the catalytic mechanism. Asn-601 carries an N-linked (GlcNAc...) asparagine glycan.

It belongs to the peptidase S8 family. The C-terminal propeptide is autocleaved.

The protein resides in the secreted. The chain is Subtilisin-like protease SBT4.1 from Arabidopsis thaliana (Mouse-ear cress).